Consider the following 199-residue polypeptide: Interleukin-11 (199 aa).

An N-terminal signal peptide occupies residues 1-21; it reads MNCVCRLVLVVLSLWPDTAVA. An important for interaction with IL11RA and for the stimulation of cell proliferation region spans residues 182–190; the sequence is HLTLDWAVR.

The protein belongs to the IL-6 superfamily. As to quaternary structure, interacts with IL11RA to associate with IL6ST, giving rise to a multimeric signaling complex.

It localises to the secreted. Cytokine that stimulates the proliferation of hematopoietic stem cells and megakaryocyte progenitor cells and induces megakaryocyte maturation resulting in increased platelet production. Also promotes the proliferation of hepatocytes in response to liver damage. Binding to its receptor formed by IL6ST and IL11RA activates a signaling cascade that promotes cell proliferation. Signaling leads to the activation of intracellular protein kinases and the phosphorylation of STAT3. The interaction with the membrane-bound IL11RA and IL6ST stimulates 'classic signaling', whereas the binding of IL11 and soluble IL11RA to IL6ST stimulates 'trans-signaling'. The chain is Interleukin-11 (IL11) from Macaca fascicularis (Crab-eating macaque).